The primary structure comprises 187 residues: UPF0301 protein BCI_0481 (187 aa).

Belongs to the UPF0301 (AlgH) family.

This is UPF0301 protein BCI_0481 from Baumannia cicadellinicola subsp. Homalodisca coagulata.